The following is a 542-amino-acid chain: Chaperonin GroEL (542 aa).

ATP contacts are provided by residues 29-32 (TLGP), 86-90 (DGTTT), Gly413, 476-478 (NAA), and Asp492.

The protein belongs to the chaperonin (HSP60) family. As to quaternary structure, forms a cylinder of 14 subunits composed of two heptameric rings stacked back-to-back. Interacts with the co-chaperonin GroES.

The protein resides in the cytoplasm. It carries out the reaction ATP + H2O + a folded polypeptide = ADP + phosphate + an unfolded polypeptide.. Together with its co-chaperonin GroES, plays an essential role in assisting protein folding. The GroEL-GroES system forms a nano-cage that allows encapsulation of the non-native substrate proteins and provides a physical environment optimized to promote and accelerate protein folding. The sequence is that of Chaperonin GroEL from Bacillus cytotoxicus (strain DSM 22905 / CIP 110041 / 391-98 / NVH 391-98).